The sequence spans 407 residues: Putative polysaccharide ligase RF_0568 (407 aa).

10 helical membrane passes run 15–35 (LGMV…LMLF), 71–91 (MTIK…LFAI), 100–120 (FIQV…VPFG), 129–149 (LILG…SHGF), 166–186 (GCAL…SSGK), 203–223 (ISDS…FILA), 229–249 (IFFK…PVIA), 272–292 (LFIW…GYGF), 324–344 (ILQI…CLVY), and 379–399 (IWQI…KLLV).

It belongs to the O-antigen ligase family.

The protein localises to the membrane. In Rickettsia felis (strain ATCC VR-1525 / URRWXCal2) (Rickettsia azadi), this protein is Putative polysaccharide ligase RF_0568.